A 238-amino-acid chain; its full sequence is Pyridoxine 5'-phosphate synthase (238 aa).

Asn7 contributes to the 3-amino-2-oxopropyl phosphate binding site. Residue 9 to 10 (DH) coordinates 1-deoxy-D-xylulose 5-phosphate. Arg18 is a 3-amino-2-oxopropyl phosphate binding site. The active-site Proton acceptor is His43. Arg45 and His50 together coordinate 1-deoxy-D-xylulose 5-phosphate. The active-site Proton acceptor is the Glu70. Thr100 lines the 1-deoxy-D-xylulose 5-phosphate pocket. Residue His190 is the Proton donor of the active site. 3-amino-2-oxopropyl phosphate contacts are provided by residues Gly191 and 212 to 213 (GH).

It belongs to the PNP synthase family. In terms of assembly, homooctamer; tetramer of dimers.

Its subcellular location is the cytoplasm. The catalysed reaction is 3-amino-2-oxopropyl phosphate + 1-deoxy-D-xylulose 5-phosphate = pyridoxine 5'-phosphate + phosphate + 2 H2O + H(+). It participates in cofactor biosynthesis; pyridoxine 5'-phosphate biosynthesis; pyridoxine 5'-phosphate from D-erythrose 4-phosphate: step 5/5. Its function is as follows. Catalyzes the complicated ring closure reaction between the two acyclic compounds 1-deoxy-D-xylulose-5-phosphate (DXP) and 3-amino-2-oxopropyl phosphate (1-amino-acetone-3-phosphate or AAP) to form pyridoxine 5'-phosphate (PNP) and inorganic phosphate. The protein is Pyridoxine 5'-phosphate synthase of Prochlorococcus marinus subsp. pastoris (strain CCMP1986 / NIES-2087 / MED4).